The following is a 295-amino-acid chain: Nucleotide-binding protein BLi03725/BL03417 (295 aa).

16 to 23 (GMSGAGKT) contributes to the ATP binding site. Position 67–70 (67–70 (DLRG)) interacts with GTP.

The protein belongs to the RapZ-like family.

Functionally, displays ATPase and GTPase activities. This chain is Nucleotide-binding protein BLi03725/BL03417, found in Bacillus licheniformis (strain ATCC 14580 / DSM 13 / JCM 2505 / CCUG 7422 / NBRC 12200 / NCIMB 9375 / NCTC 10341 / NRRL NRS-1264 / Gibson 46).